The chain runs to 541 residues: Chaperonin GroEL (541 aa).

Residues 29 to 32, 86 to 90, Gly-413, 477 to 479, and Asp-493 each bind ATP; these read TLGP, DGTTT, and DAL.

It belongs to the chaperonin (HSP60) family. Forms a cylinder of 14 subunits composed of two heptameric rings stacked back-to-back. Interacts with the co-chaperonin GroES.

It localises to the cytoplasm. It catalyses the reaction ATP + H2O + a folded polypeptide = ADP + phosphate + an unfolded polypeptide.. Functionally, together with its co-chaperonin GroES, plays an essential role in assisting protein folding. The GroEL-GroES system forms a nano-cage that allows encapsulation of the non-native substrate proteins and provides a physical environment optimized to promote and accelerate protein folding. The chain is Chaperonin GroEL from Clostridium botulinum (strain Loch Maree / Type A3).